A 180-amino-acid chain; its full sequence is Large ribosomal subunit protein uL5 (180 aa).

This sequence belongs to the universal ribosomal protein uL5 family. As to quaternary structure, part of the 50S ribosomal subunit; part of the 5S rRNA/L5/L18/L25 subcomplex. Contacts the 5S rRNA and the P site tRNA. Forms a bridge to the 30S subunit in the 70S ribosome.

This is one of the proteins that bind and probably mediate the attachment of the 5S RNA into the large ribosomal subunit, where it forms part of the central protuberance. In the 70S ribosome it contacts protein S13 of the 30S subunit (bridge B1b), connecting the 2 subunits; this bridge is implicated in subunit movement. Contacts the P site tRNA; the 5S rRNA and some of its associated proteins might help stabilize positioning of ribosome-bound tRNAs. The polypeptide is Large ribosomal subunit protein uL5 (Lactobacillus helveticus (strain DPC 4571)).